The sequence spans 419 residues: S-adenosylmethionine synthase (419 aa).

His-15 provides a ligand contact to ATP. Asp-17 is a binding site for Mg(2+). Glu-43 contributes to the K(+) binding site. L-methionine contacts are provided by Glu-56 and Gln-100. A flexible loop region spans residues 100–110 (QSPDIAQGVNE). ATP is bound by residues 171-173 (DGK), 248-249 (KF), Asp-257, 263-264 (RK), Ala-280, and Lys-284. Position 257 (Asp-257) interacts with L-methionine. Lys-288 contributes to the L-methionine binding site.

This sequence belongs to the AdoMet synthase family. As to quaternary structure, homotetramer; dimer of dimers. The cofactor is Mg(2+). Requires K(+) as cofactor.

It is found in the cytoplasm. The enzyme catalyses L-methionine + ATP + H2O = S-adenosyl-L-methionine + phosphate + diphosphate. It functions in the pathway amino-acid biosynthesis; S-adenosyl-L-methionine biosynthesis; S-adenosyl-L-methionine from L-methionine: step 1/1. Functionally, catalyzes the formation of S-adenosylmethionine (AdoMet) from methionine and ATP. The overall synthetic reaction is composed of two sequential steps, AdoMet formation and the subsequent tripolyphosphate hydrolysis which occurs prior to release of AdoMet from the enzyme. The protein is S-adenosylmethionine synthase of Prochlorococcus marinus (strain MIT 9303).